The sequence spans 150 residues: UPF0098 protein TC_0109 (150 aa).

It belongs to the UPF0098 family.

This Chlamydia muridarum (strain MoPn / Nigg) protein is UPF0098 protein TC_0109.